The sequence spans 50 residues: Insulin (50 aa).

Cystine bridges form between C7/C36, C19/C49, and C35/C40.

The protein belongs to the insulin family. Heterodimer of a B chain and an A chain linked by two disulfide bonds.

The protein localises to the secreted. Insulin decreases blood glucose concentration. It increases cell permeability to monosaccharides, amino acids and fatty acids. It accelerates glycolysis, the pentose phosphate cycle, and glycogen synthesis in liver. This chain is Insulin (INS), found in Proechimys guairae (Guaira spiny rat).